The chain runs to 387 residues: Deoxyguanosinetriphosphate triphosphohydrolase-like protein (387 aa).

The tract at residues 1–26 (MTAPYASDPQRARGRRVKEEESTFRS) is disordered. Residues 17 to 26 (VKEEESTFRS) are compositionally biased toward basic and acidic residues. The 137-residue stretch at 62–198 (RLTHSIEVAQ…AAIADDVAYN (137 aa)) folds into the HD domain.

It belongs to the dGTPase family. Type 2 subfamily.

This chain is Deoxyguanosinetriphosphate triphosphohydrolase-like protein, found in Roseobacter denitrificans (strain ATCC 33942 / OCh 114) (Erythrobacter sp. (strain OCh 114)).